A 130-amino-acid polypeptide reads, in one-letter code: Small ribosomal subunit protein uS9 (130 aa).

The disordered stretch occupies residues 106–130 (RDSRKVERKKPGLKKARKASQFSKR). A compositionally biased stretch (basic residues) spans 111–130 (VERKKPGLKKARKASQFSKR).

Belongs to the universal ribosomal protein uS9 family.

In Streptococcus pneumoniae (strain ATCC 700669 / Spain 23F-1), this protein is Small ribosomal subunit protein uS9.